The following is a 1704-amino-acid chain: Phospholipid-transporting ATPase ABCA3 (1704 aa).

An N-linked (GlcNAc...) asparagine glycan is attached at Asn14. Residues 22-42 (VLVTVLELFLPLLFSGILIWL) form a helical membrane-spanning segment. 3 N-linked (GlcNAc...) asparagine glycosylation sites follow: Asn53, Asn124, and Asn140. 6 helical membrane passes run 261–283 (YQLPLLLLLSFTYTALTIARAVV), 307–327 (AWFLLFFLFLLIAASFMTLLF), 344–364 (SLVLAFLLCFAISTISFSFMV), 373–393 (MAAAFGGFLYFFTYIPYFFVA), 405–425 (LCSCLLSNVAMAMGAQLIGKF), and 447–467 (FCFGQVLGMLLLDSVLYGLVT). The ABC transporter 1 domain maps to 530–763 (IKIKHLSKVF…YGAGYHMTLV (234 aa)). 566–573 (GHNGAGKT) contributes to the ATP binding site. N-linked (GlcNAc...) asparagine glycosylation is found at Asn620 and Asn783. Transmembrane regions (helical) follow at residues 925–945 (MVAAQVLVPLTCVTLALLAIN), 1100–1120 (IALNLLFAMAFLASTFSILAV), 1144–1164 (SALLWDLISFLIPSLLLLVVF), 1183–1203 (LLLLLYGWAIIPLMYLMNFFF), 1213–1233 (LTIFNILSGIATFLMVTIMRI), 1245–1265 (LDHVFLVLPNHCLGMAVSSFY), and 1306–1326 (FVASMAASGCAYLILLFLIET). The ABC transporter 2 domain occupies 1381-1614 (LIIKELSKVY…FGSGYSLRAK (234 aa)). An ATP-binding site is contributed by 1416 to 1423 (GFNGAGKT).

Belongs to the ABC transporter superfamily. ABCA family. In terms of assembly, homooligomer; disulfide-linked. In terms of processing, N-glycosylated. Localization at intracellular vesicles is accompanied by processing of oligosaccharide from high mannose type to complex type. N-linked glycosylation at Asn-124 and Asn-140 is required for stability and efficient anterograde trafficking and prevents from proteasomal degradation. Post-translationally, proteolytically cleaved by CTSL and to a lower extent by CTSB within multivesicular bodies (MVB) and lamellar bodies (LB) leading to a mature form of 150 kDa. As to expression, expressed in brain, pancreas, skeletal muscle and heart. Highly expressed in the lung in an AT2-cell-specific manner. Weakly expressed in placenta, kidney and liver. Also expressed in medullary thyroid carcinoma cells (MTC) and in C-cell carcinoma.

The protein resides in the endosome. It localises to the multivesicular body membrane. The protein localises to the cytoplasmic vesicle membrane. Its subcellular location is the late endosome membrane. It is found in the lysosome membrane. The enzyme catalyses ATP + H2O + xenobioticSide 1 = ADP + phosphate + xenobioticSide 2.. It catalyses the reaction a 1,2-diacyl-sn-glycero-3-phosphocholine(in) + ATP + H2O = a 1,2-diacyl-sn-glycero-3-phosphocholine(out) + ADP + phosphate + H(+). The catalysed reaction is ATP + H2O + phospholipidSide 1 = ADP + phosphate + phospholipidSide 2.. It carries out the reaction 1,2-dihexadecanoyl-sn-glycero-3-phosphocholine(in) + ATP + H2O = 1,2-dihexadecanoyl-sn-glycero-3-phosphocholine(out) + ADP + phosphate + H(+). The enzyme catalyses cholesterol(in) + ATP + H2O = cholesterol(out) + ADP + phosphate + H(+). It catalyses the reaction a 1,2-diacyl-sn-glycero-3-phospho-(1'-sn-glycerol)(in) + ATP + H2O = a 1,2-diacyl-sn-glycero-3-phospho-(1'-sn-glycerol)(out) + ADP + phosphate + H(+). The ATP-dependent phosphatidylcholine transport is competitively inhibited by miltefosine. In terms of biological role, catalyzes the ATP-dependent transport of phospholipids such as phosphatidylcholine and phosphoglycerol from the cytoplasm into the lumen side of lamellar bodies, in turn participates in the lamellar bodies biogenesis and homeostasis of pulmonary surfactant. Transports preferentially phosphatidylcholine containing short acyl chains. In addition plays a role as an efflux transporter of miltefosine across macrophage membranes and free cholesterol (FC) through intralumenal vesicles by removing FC from the cell as a component of surfactant and protects cells from free cholesterol toxicity. The sequence is that of Phospholipid-transporting ATPase ABCA3 from Homo sapiens (Human).